Here is a 24-residue protein sequence, read N- to C-terminus: Brevinin-1GRa (24 aa).

As to expression, expressed by the skin glands.

The protein localises to the secreted. Functionally, antimicrobial peptide active against the Gram-positive bacterium S.aureus (MIC=12.5 uM) and against the Gram-negative bacteria E.coli (MIC=25 uM). The protein is Brevinin-1GRa of Odorrana grahami (Yunnanfu frog).